Consider the following 804-residue polypeptide: Lon protease (804 aa).

Residues 1–23 (MSADSENETSESSPAGEATASTS) form a disordered region. In terms of domain architecture, Lon N-terminal spans 30-224 (LILLPVRNAV…KVLDAVAGRI (195 aa)). 376–383 (GPPGVGKT) serves as a coordination point for ATP. Positions 612 to 793 (TSLPGVVTGL…DDAVREIIED (182 aa)) constitute a Lon proteolytic domain. Catalysis depends on residues S699 and K742.

The protein belongs to the peptidase S16 family. As to quaternary structure, homohexamer. Organized in a ring with a central cavity.

The protein resides in the cytoplasm. The catalysed reaction is Hydrolysis of proteins in presence of ATP.. In terms of biological role, ATP-dependent serine protease that mediates the selective degradation of mutant and abnormal proteins as well as certain short-lived regulatory proteins. Required for cellular homeostasis and for survival from DNA damage and developmental changes induced by stress. Degrades polypeptides processively to yield small peptide fragments that are 5 to 10 amino acids long. Binds to DNA in a double-stranded, site-specific manner. This Paraburkholderia phytofirmans (strain DSM 17436 / LMG 22146 / PsJN) (Burkholderia phytofirmans) protein is Lon protease.